A 397-amino-acid chain; its full sequence is Elongation factor Tu (397 aa).

The 197-residue stretch at 10-206 folds into the tr-type G domain; the sequence is KPHVNIGTIG…AVDDNVPEPE (197 aa). Residues 19 to 26 are G1; the sequence is GHVDHGKT. Residue 19–26 participates in GTP binding; the sequence is GHVDHGKT. Thr26 contributes to the Mg(2+) binding site. Residues 62 to 66 form a G2 region; it reads GITIN. The segment at 83 to 86 is G3; the sequence is DAPG. GTP is bound by residues 83 to 87 and 138 to 141; these read DAPGH and NKSD. The tract at residues 138–141 is G4; the sequence is NKSD. The segment at 176–178 is G5; it reads SAL.

This sequence belongs to the TRAFAC class translation factor GTPase superfamily. Classic translation factor GTPase family. EF-Tu/EF-1A subfamily. As to quaternary structure, monomer.

It is found in the cytoplasm. It catalyses the reaction GTP + H2O = GDP + phosphate + H(+). GTP hydrolase that promotes the GTP-dependent binding of aminoacyl-tRNA to the A-site of ribosomes during protein biosynthesis. This is Elongation factor Tu from Brevibacterium linens.